Reading from the N-terminus, the 466-residue chain is 3-isopropylmalate dehydratase large subunit (466 aa).

Positions 347, 407, and 410 each coordinate [4Fe-4S] cluster.

The protein belongs to the aconitase/IPM isomerase family. LeuC type 1 subfamily. As to quaternary structure, heterodimer of LeuC and LeuD. [4Fe-4S] cluster serves as cofactor.

The enzyme catalyses (2R,3S)-3-isopropylmalate = (2S)-2-isopropylmalate. Its pathway is amino-acid biosynthesis; L-leucine biosynthesis; L-leucine from 3-methyl-2-oxobutanoate: step 2/4. In terms of biological role, catalyzes the isomerization between 2-isopropylmalate and 3-isopropylmalate, via the formation of 2-isopropylmaleate. This Shewanella loihica (strain ATCC BAA-1088 / PV-4) protein is 3-isopropylmalate dehydratase large subunit.